Consider the following 620-residue polypeptide: Glutathione-regulated potassium-efflux system protein KefC (620 aa).

The Periplasmic portion of the chain corresponds to 1-3 (MDS). Residues 4–24 (HTLVQALIYLGSAALIVPIAV) traverse the membrane as a helical segment. R25 is a topological domain (cytoplasmic). Residues 26–46 (LGLGSVLGYLIAGCIIGPWGL) traverse the membrane as a helical segment. The Periplasmic segment spans residues 47–53 (RLVTDAE). A helical transmembrane segment spans residues 54–74 (SILHFAEIGVVLMLFIIGLEL). Residues 75-89 (DPQRLWKLRAAVFGG) lie on the Cytoplasmic side of the membrane. A helical membrane pass occupies residues 90 to 110 (GALQMVICGGLLGLFCMLLGL). Residues 111–113 (RWQ) are Periplasmic-facing. Residues 114–134 (VAELIGMTLALSSTAIAMQAM) form a helical membrane-spanning segment. The Cytoplasmic segment spans residues 135–148 (NERNLMVTQMGRSA). A helical transmembrane segment spans residues 149-169 (FAVLLFQDIAAIPLVAMIPLL). Residues 170 to 177 (AASSASTT) are Periplasmic-facing. The helical transmembrane segment at 178–198 (MGAFALSALKVAGALVLVVLL) threads the bilayer. Residues 199–213 (GRYVTRPALRFVARS) are Cytoplasmic-facing. Residues 214 to 233 (GLREVFSAVALFLVFGFGLL) traverse the membrane as a helical segment. The Periplasmic portion of the chain corresponds to 234 to 236 (LEE). The helical transmembrane segment at 237 to 254 (VGLSMAMGAFLAGVLLAS) threads the bilayer. Over 255–269 (SEYRHALESDIEPFK) the chain is Cytoplasmic. The chain crosses the membrane as a helical span at residues 270–290 (GLLLGLFFIGVGMSIDFGTLI). At 291 to 293 (ENP) the chain is on the periplasmic side. Residues 294 to 314 (LRIVILLLGFLIIKIAMLWLI) form a helical membrane-spanning segment. At 315-326 (ARPLQVPNKQRR) the chain is on the cytoplasmic side. A helical membrane pass occupies residues 327–347 (WFAVLLGQGSEFAFVVFGAAQ). The Periplasmic portion of the chain corresponds to 348-358 (MANVLEPEWAK). The helical transmembrane segment at 359 to 379 (SLTLAVALSMAATPILLVILN) threads the bilayer. The Cytoplasmic segment spans residues 380–620 (RLEQSSTEEA…ADEPETKPSS (241 aa)). The RCK N-terminal domain occupies 399–518 (QPRVIIAGFG…AGVEKPERET (120 aa)). Positions 597–620 (GWQGTEEGKHTGNMADEPETKPSS) are disordered.

This sequence belongs to the monovalent cation:proton antiporter 2 (CPA2) transporter (TC 2.A.37) family. KefC subfamily. Homodimer. Interacts with the regulatory subunit KefF.

The protein localises to the cell inner membrane. Functionally, pore-forming subunit of a potassium efflux system that confers protection against electrophiles. Catalyzes K(+)/H(+) antiport. The protein is Glutathione-regulated potassium-efflux system protein KefC of Shigella flexneri.